Here is a 149-residue protein sequence, read N- to C-terminus: Deoxyuridine 5'-triphosphate nucleotidohydrolase (149 aa).

Substrate-binding positions include 66 to 68 (RSG), N79, 83 to 85 (TID), and K93.

Belongs to the dUTPase family. It depends on Mg(2+) as a cofactor.

It carries out the reaction dUTP + H2O = dUMP + diphosphate + H(+). It functions in the pathway pyrimidine metabolism; dUMP biosynthesis; dUMP from dCTP (dUTP route): step 2/2. In terms of biological role, this enzyme is involved in nucleotide metabolism: it produces dUMP, the immediate precursor of thymidine nucleotides and it decreases the intracellular concentration of dUTP so that uracil cannot be incorporated into DNA. The polypeptide is Deoxyuridine 5'-triphosphate nucleotidohydrolase (Corynebacterium glutamicum (strain ATCC 13032 / DSM 20300 / JCM 1318 / BCRC 11384 / CCUG 27702 / LMG 3730 / NBRC 12168 / NCIMB 10025 / NRRL B-2784 / 534)).